The primary structure comprises 418 residues: Gamma-glutamyl phosphate reductase (418 aa).

The protein belongs to the gamma-glutamyl phosphate reductase family.

It is found in the cytoplasm. It carries out the reaction L-glutamate 5-semialdehyde + phosphate + NADP(+) = L-glutamyl 5-phosphate + NADPH + H(+). It participates in amino-acid biosynthesis; L-proline biosynthesis; L-glutamate 5-semialdehyde from L-glutamate: step 2/2. Catalyzes the NADPH-dependent reduction of L-glutamate 5-phosphate into L-glutamate 5-semialdehyde and phosphate. The product spontaneously undergoes cyclization to form 1-pyrroline-5-carboxylate. The polypeptide is Gamma-glutamyl phosphate reductase (Histophilus somni (strain 129Pt) (Haemophilus somnus)).